A 257-amino-acid polypeptide reads, in one-letter code: Thioredoxin-dependent peroxide reductase, mitochondrial (257 aa).

The N-terminal 62 residues, 1–62 (MAATAGRLFR…FAFSTSSSYH (62 aa)), are a transit peptide targeting the mitochondrion. Positions 64-222 (PAVTQHAPYF…TLRLVKAFQF (159 aa)) constitute a Thioredoxin domain. N6-succinyllysine is present on Lys84. Lys92 bears the N6-acetyllysine; alternate mark. An N6-succinyllysine; alternate modification is found at Lys92. The Cysteine sulfenic acid (-SOH) intermediate role is filled by Cys109. Thr147 bears the Phosphothreonine mark.

Belongs to the peroxiredoxin family. AhpC/Prx1 subfamily. Homodimer; disulfide-linked, upon oxidation. 6 homodimers assemble to form a ring-like dodecamer. Interacts with NEK6. Interacts with LRRK2. Interacts with MAP3K13. Interacts with RPS6KC1 (via PX domain). Phosphorylated by LRRK2; phosphorylation reduces perodixase activity. In terms of processing, the enzyme can be inactivated by further oxidation of the cysteine sulfenic acid (C(P)-SOH) to sulphinic acid (C(P)-SO2H) and sulphonic acid (C(P)-SO3H) instead of its condensation to a disulfide bond. Post-translationally, S-palmitoylated. In terms of tissue distribution, predominantly expressed in adrenal cortex. Also detected in liver, renal cortex and medulla, and adrenal medulla (at protein level).

It is found in the mitochondrion matrix. Its subcellular location is the cytoplasm. It localises to the early endosome. The enzyme catalyses a hydroperoxide + [thioredoxin]-dithiol = an alcohol + [thioredoxin]-disulfide + H2O. In terms of biological role, thiol-specific peroxidase that catalyzes the reduction of hydrogen peroxide and organic hydroperoxides to water and alcohols, respectively. Plays a role in cell protection against oxidative stress by detoxifying peroxides. Acts synergistically with MAP3K13 to regulate the activation of NF-kappa-B in the cytosol. Required for the maintenance of physical strength. This is Thioredoxin-dependent peroxide reductase, mitochondrial (PRDX3) from Bos taurus (Bovine).